A 30-amino-acid polypeptide reads, in one-letter code: MIDDSQIFVALLFALVSAVLAIRLGKELYQ.

The chain crosses the membrane as a helical span at residues 7-26; that stretch reads IFVALLFALVSAVLAIRLGK.

It belongs to the PsaM family.

The protein resides in the plastid. Its subcellular location is the chloroplast thylakoid membrane. This is Photosystem I reaction center subunit XII from Porphyra purpurea (Red seaweed).